The primary structure comprises 419 residues: Acyl-coenzyme A thioesterase 6 (419 aa).

Active-site charge relay system residues include Ser232, Asp324, and His358. A Peroxisome targeting signal motif is present at residues 417–419 (SKL).

This sequence belongs to the C/M/P thioester hydrolase family. As to expression, highly expressed in white adipose tissue. Detected at lower levels in kidney, liver, brown adipose tissue and brain.

Its subcellular location is the peroxisome. The enzyme catalyses pristanoyl-CoA + H2O = 2,6,10,14-tetramethylpentadecanoate + CoA + H(+). The catalysed reaction is phytanoyl-CoA + H2O = 3,7,11,15-tetramethylhexadecanoate + CoA + H(+). It functions in the pathway lipid metabolism; fatty acid metabolism. In terms of biological role, catalyzes the hydrolysis of acyl-CoAs into free fatty acids and coenzyme A (CoASH), regulating their respective intracellular levels. Catalyzes the hydrolysis of phytanoyl-CoA and pristanoyl-CoA, two methyl-branched fatty acids derived from phytol, that enter the body via the diet. This is Acyl-coenzyme A thioesterase 6 from Mus musculus (Mouse).